A 246-amino-acid polypeptide reads, in one-letter code: Envelope glycoprotein L (246 aa).

A signal peptide spans 1–19 (MKTNIFFIFLISILNQIYA). Residues 29–235 (LEQECIKNIL…EKYNEVLPFR (207 aa)) form the gL betaherpesvirus-type domain. C134 and C139 are disulfide-bonded.

Belongs to the herpesviridae glycoprotein L (gL) family. Betaherpesvirinae gL subfamily. In terms of assembly, interacts with glycoprotein H (gH); this interaction is necessary for the correct processing and cell surface expression of gH.

Its subcellular location is the virion membrane. The protein localises to the host cell membrane. The protein resides in the host Golgi apparatus. It is found in the host trans-Golgi network. Functionally, the heterodimer glycoprotein H-glycoprotein L is required for the fusion of viral and plasma membranes leading to virus entry into the host cell. Acts as a functional inhibitor of gH and maintains gH in an inhibited form. Upon binding to host integrins, gL dissociates from gH leading to activation of the viral fusion glycoproteins gB and gH. The polypeptide is Envelope glycoprotein L (Homo sapiens (Human)).